The sequence spans 582 residues: Histone deacetylase 9-B (582 aa).

Residues 146–195 (SNEVKQKLQEFLLSKSTKDITLNGIPQKITQSSKLWYTASHHTSLEQSSP) are interaction with mef2. Residues 189 to 205 (SLEQSSPPLGGASSSCK) are compositionally biased toward polar residues. 4 disordered regions span residues 189-254 (SLEQ…KEGN), 270-314 (TASS…QSRL), 409-447 (LSSG…RTQS), and 496-567 (VHLQ…NQSS). Basic and acidic residues-rich tracts occupy residues 213-224 (DYRDDFPLRKTV) and 238-253 (KVAE…RKEG). The segment covering 270-289 (TASSSAPGSGPSSPNGACSA) has biased composition (low complexity). Polar residues predominate over residues 295-314 (GPSSLPVTTRTERWPSQSRL).

Belongs to the histone deacetylase family. HD type 2 subfamily. In terms of assembly, homodimer. Interacts with mef2.

It is found in the nucleus. It carries out the reaction N(6)-acetyl-L-lysyl-[histone] + H2O = L-lysyl-[histone] + acetate. Its function is as follows. Devoided of intrinsic deacetylase activity, promotes the deacetylation of lysine residues on the N-terminal part of the core histones (H2A, H2B, H3 and H4) by recruiting other histone deacetylases. Histone deacetylation gives a tag for epigenetic repression and plays an important role in transcriptional regulation, cell cycle progression and developmental events. Represses MEF2-dependent transcription. In Danio rerio (Zebrafish), this protein is Histone deacetylase 9-B (hdac9b).